We begin with the raw amino-acid sequence, 420 residues long: Reticulon-4 receptor-like 2 (420 aa).

The signal sequence occupies residues 1–30; sequence MLPGLRRLLQGPASACLLLTLLALPSVTPS. 2 disulfides stabilise this stretch: Cys-31–Cys-37 and Cys-35–Cys-46. Residues 31-60 enclose the LRRNT domain; sequence CPMLCTCYSSPPTVSCQANNFSSVPLSLPP. Asn-50 carries N-linked (GlcNAc...) asparagine glycosylation. LRR repeat units follow at residues 61-82, 83-104, 107-129, 132-153, 156-177, 180-201, 204-225, and 228-249; these read STQRLFLQNNLIRSLRPGTFGP, NLLTLWLFSNNLSTIHPGTFRH, ALEELDLGDNRHLRSLEPDTFQG, RLQSLHLYRCQLSSLPGNIFRG, SLQYLYLQENSLLHLQDDLFAD, NLSHLFLHGNRLRLLTEHVFRG, SLDRLLLHGNRLQGVHRAAFHG, and RLTILYLFNNSLASLPGEALAD. N-linked (GlcNAc...) asparagine glycosylation occurs at Asn-93. The N-linked (GlcNAc...) asparagine glycan is linked to Asn-236. In terms of domain architecture, LRRCT spans 261–312; that stretch reads NPWACDCRARPLWAWFQRARVSSSDVTCATPPERQGRDLRALRDSDFQACPP. 2 disulfides stabilise this stretch: Cys-265-Cys-288 and Cys-267-Cys-310. The disordered stretch occupies residues 286–399; that stretch reads VTCATPPERQ…CQAPADSRGP (114 aa). The segment covering 294 to 306 has biased composition (basic and acidic residues); sequence RQGRDLRALRDSD. Residues 315–327 form an important for interaction with MAG region; the sequence is PTRPGSRARGNSS. Residues 351-360 show a composition bias toward basic and acidic residues; that stretch reads LPAEDSRGRQ. Gly-398 carries GPI-anchor amidated glycine lipidation. The propeptide at 399-420 is removed in mature form; the sequence is PALSAGLRTPLLCLLPLALHHL.

The protein belongs to the Nogo receptor family. Interaction with MAG is controversial, and may be indirect. Interacts with MAG. Does not interact with OMG and RTN4. Post-translationally, undergoes zinc metalloproteinase-mediated ectodomain shedding in neuroblastoma cells; is released both as a full-length ectodomain and an N-terminal fragment containing the leucine-rich repeat (LRR) region of the protein. N-glycosylated. In terms of tissue distribution, detected in brain. Detected in hippocampus neurons (at protein level).

It is found in the cell membrane. Its subcellular location is the membrane raft. The protein resides in the cell projection. It localises to the dendrite. The protein localises to the axon. It is found in the perikaryon. In terms of biological role, cell surface receptor that plays a functionally redundant role in the inhibition of neurite outgrowth mediated by MAG. Plays a functionally redundant role in postnatal brain development. Contributes to normal axon migration across the brain midline and normal formation of the corpus callosum. Does not seem to play a significant role in regulating axon regeneration in the adult central nervous system. Protects motoneurons against apoptosis; protection against apoptosis is probably mediated by MAG. Like other family members, plays a role in restricting the number dendritic spines and the number of synapses that are formed during brain development. Signaling mediates activation of Rho and downstream reorganization of the actin cytoskeleton. In Mus musculus (Mouse), this protein is Reticulon-4 receptor-like 2.